Reading from the N-terminus, the 354-residue chain is UDP-N-acetylglucosamine--N-acetylmuramyl-(pentapeptide) pyrophosphoryl-undecaprenol N-acetylglucosamine transferase (354 aa).

UDP-N-acetyl-alpha-D-glucosamine is bound by residues 13–15, Asn-125, Ser-189, Ile-242, 261–266, and Gln-286; these read SGG and ALTVSE.

The protein belongs to the glycosyltransferase 28 family. MurG subfamily.

It localises to the cell inner membrane. It catalyses the reaction di-trans,octa-cis-undecaprenyl diphospho-N-acetyl-alpha-D-muramoyl-L-alanyl-D-glutamyl-meso-2,6-diaminopimeloyl-D-alanyl-D-alanine + UDP-N-acetyl-alpha-D-glucosamine = di-trans,octa-cis-undecaprenyl diphospho-[N-acetyl-alpha-D-glucosaminyl-(1-&gt;4)]-N-acetyl-alpha-D-muramoyl-L-alanyl-D-glutamyl-meso-2,6-diaminopimeloyl-D-alanyl-D-alanine + UDP + H(+). It functions in the pathway cell wall biogenesis; peptidoglycan biosynthesis. Its function is as follows. Cell wall formation. Catalyzes the transfer of a GlcNAc subunit on undecaprenyl-pyrophosphoryl-MurNAc-pentapeptide (lipid intermediate I) to form undecaprenyl-pyrophosphoryl-MurNAc-(pentapeptide)GlcNAc (lipid intermediate II). The chain is UDP-N-acetylglucosamine--N-acetylmuramyl-(pentapeptide) pyrophosphoryl-undecaprenol N-acetylglucosamine transferase from Buchnera aphidicola subsp. Acyrthosiphon pisum (strain APS) (Acyrthosiphon pisum symbiotic bacterium).